Consider the following 267-residue polypeptide: 4-hydroxy-tetrahydrodipicolinate reductase (267 aa).

NAD(+) contacts are provided by residues 10-15 and glutamate 36; that span reads GCGGRM. Residue arginine 37 coordinates NADP(+). NAD(+)-binding positions include 99–101 and 123–126; these read GTT and APNF. Histidine 156 acts as the Proton donor/acceptor in catalysis. Position 157 (histidine 157) interacts with (S)-2,3,4,5-tetrahydrodipicolinate. Residue lysine 160 is the Proton donor of the active site. Position 166-167 (166-167) interacts with (S)-2,3,4,5-tetrahydrodipicolinate; sequence GT.

It belongs to the DapB family.

Its subcellular location is the cytoplasm. It carries out the reaction (S)-2,3,4,5-tetrahydrodipicolinate + NAD(+) + H2O = (2S,4S)-4-hydroxy-2,3,4,5-tetrahydrodipicolinate + NADH + H(+). The enzyme catalyses (S)-2,3,4,5-tetrahydrodipicolinate + NADP(+) + H2O = (2S,4S)-4-hydroxy-2,3,4,5-tetrahydrodipicolinate + NADPH + H(+). The protein operates within amino-acid biosynthesis; L-lysine biosynthesis via DAP pathway; (S)-tetrahydrodipicolinate from L-aspartate: step 4/4. Its function is as follows. Catalyzes the conversion of 4-hydroxy-tetrahydrodipicolinate (HTPA) to tetrahydrodipicolinate. In Laribacter hongkongensis (strain HLHK9), this protein is 4-hydroxy-tetrahydrodipicolinate reductase.